We begin with the raw amino-acid sequence, 153 residues long: Aspartate carbamoyltransferase regulatory chain (153 aa).

Residues C109, C114, C138, and C141 each contribute to the Zn(2+) site.

It belongs to the PyrI family. As to quaternary structure, contains catalytic and regulatory chains. Requires Zn(2+) as cofactor.

Its function is as follows. Involved in allosteric regulation of aspartate carbamoyltransferase. This is Aspartate carbamoyltransferase regulatory chain from Vibrio campbellii (strain ATCC BAA-1116).